Reading from the N-terminus, the 723-residue chain is ABC transporter F family member 4 (723 aa).

The interval 1–117 is disordered; that stretch reads MGKKKSDESA…KEQKKREAKE (117 aa). The segment covering 18–31 has biased composition (basic and acidic residues); the sequence is SGKDASKDSKKEKL. The segment covering 50 to 65 has biased composition (polar residues); the sequence is GSSSRTKAAPKSTSYT. Over residues 72–84 the composition is skewed to acidic residues; it reads PSDEEDDGESDEE. The span at 95 to 117 shows a compositional bias: basic and acidic residues; that stretch reads KSEQRHLEISVTDKEQKKREAKE. Residues 163 to 423 enclose the ABC transporter 1 domain; it reads ITIESFSVSA…EMNKKFDVYD (261 aa). An ATP-binding site is contributed by 195–202; sequence GPNGMGKS. Disordered stretches follow at residues 256–275 and 427–472; these read LQKS…DDDD and KAAK…APEA. The span at 266 to 275 shows a compositional bias: acidic residues; sequence ENVDGEDDDD. Basic and acidic residues predominate over residues 437-446; the sequence is QQEKVKDRAK. Residues 496-721 form the ABC transporter 2 domain; sequence LQLIEVSFSY…DLQREIKAEV (226 aa). 530–537 contacts ATP; sequence GPNGAGKS.

It belongs to the ABC transporter superfamily. ABCF family. EF3 (TC 3.A.1.121) subfamily.

The sequence is that of ABC transporter F family member 4 (ABCF4) from Arabidopsis thaliana (Mouse-ear cress).